The sequence spans 342 residues: Methionyl-tRNA formyltransferase (342 aa).

108–111 (SLLP) lines the (6S)-5,6,7,8-tetrahydrofolate pocket.

The protein belongs to the Fmt family.

It carries out the reaction L-methionyl-tRNA(fMet) + (6R)-10-formyltetrahydrofolate = N-formyl-L-methionyl-tRNA(fMet) + (6S)-5,6,7,8-tetrahydrofolate + H(+). Attaches a formyl group to the free amino group of methionyl-tRNA(fMet). The formyl group appears to play a dual role in the initiator identity of N-formylmethionyl-tRNA by promoting its recognition by IF2 and preventing the misappropriation of this tRNA by the elongation apparatus. The protein is Methionyl-tRNA formyltransferase of Prochlorococcus marinus (strain MIT 9313).